A 393-amino-acid polypeptide reads, in one-letter code: Pre-mRNA-splicing regulator WTAP (393 aa).

The segment at 240–393 is disordered; sequence QQQIQTSGNR…SSVNVQGSVL (154 aa). Over residues 254 to 267 the composition is skewed to basic and acidic residues; the sequence is ESKDEGETSGKDCG. Polar residues predominate over residues 272–286; that stretch reads GPSNGGSSHQRTHSS. Over residues 310–319 the composition is skewed to basic and acidic residues; that stretch reads LPNHSEERTS. The span at 320–353 shows a compositional bias: polar residues; it reads RGGSSYMNQLSTGYESVDSPTGSENSLTHQSNDT. Residues 354–365 show a composition bias toward basic and acidic residues; the sequence is DSNHDSQEEKPV. Over residues 369–393 the composition is skewed to polar residues; the sequence is GNRTVSSRHLQNGLDSSVNVQGSVL.

This sequence belongs to the fl(2)d family. In terms of assembly, component of the WMM complex, a N6-methyltransferase complex composed of a catalytic subcomplex, named MAC, and of an associated subcomplex, named MACOM. Component of the MACOM subcomplex.

It localises to the nucleus speckle. It is found in the nucleus. The protein resides in the nucleoplasm. Associated component of the WMM complex, a complex that mediates N6-methyladenosine (m6A) methylation of RNAs, a modification that plays a role in the efficiency of mRNA splicing and RNA processing. The protein is Pre-mRNA-splicing regulator WTAP of Xenopus tropicalis (Western clawed frog).